The following is a 237-amino-acid chain: Orotidine 5'-phosphate decarboxylase (237 aa).

Substrate contacts are provided by residues D11, K34, 61–70, T124, R186, Q195, G215, and R216; that span reads DLKLHDIPNT. Residue K63 is the Proton donor of the active site.

This sequence belongs to the OMP decarboxylase family. Type 1 subfamily. As to quaternary structure, homodimer.

It catalyses the reaction orotidine 5'-phosphate + H(+) = UMP + CO2. It participates in pyrimidine metabolism; UMP biosynthesis via de novo pathway; UMP from orotate: step 2/2. In terms of biological role, catalyzes the decarboxylation of orotidine 5'-monophosphate (OMP) to uridine 5'-monophosphate (UMP). The sequence is that of Orotidine 5'-phosphate decarboxylase from Lactococcus lactis subsp. cremoris (strain SK11).